Here is a 116-residue protein sequence, read N- to C-terminus: S-adenosylmethionine decarboxylase proenzyme (116 aa).

Ser-63 acts as the Schiff-base intermediate with substrate; via pyruvic acid in catalysis. Ser-63 is subject to Pyruvic acid (Ser); by autocatalysis. The active-site Proton acceptor; for processing activity is the His-68. The active-site Proton donor; for catalytic activity is Cys-83.

Belongs to the prokaryotic AdoMetDC family. Type 1 subfamily. In terms of assembly, heterotetramer of two alpha and two beta chains arranged as a dimer of alpha/beta heterodimers. Pyruvate serves as cofactor. Post-translationally, is synthesized initially as an inactive proenzyme. Formation of the active enzyme involves a self-maturation process in which the active site pyruvoyl group is generated from an internal serine residue via an autocatalytic post-translational modification. Two non-identical subunits are generated from the proenzyme in this reaction, and the pyruvate is formed at the N-terminus of the alpha chain, which is derived from the carboxyl end of the proenzyme. The post-translation cleavage follows an unusual pathway, termed non-hydrolytic serinolysis, in which the side chain hydroxyl group of the serine supplies its oxygen atom to form the C-terminus of the beta chain, while the remainder of the serine residue undergoes an oxidative deamination to produce ammonia and the pyruvoyl group blocking the N-terminus of the alpha chain.

It carries out the reaction S-adenosyl-L-methionine + H(+) = S-adenosyl 3-(methylsulfanyl)propylamine + CO2. Its pathway is amine and polyamine biosynthesis; S-adenosylmethioninamine biosynthesis; S-adenosylmethioninamine from S-adenosyl-L-methionine: step 1/1. Catalyzes the decarboxylation of S-adenosylmethionine to S-adenosylmethioninamine (dcAdoMet), the propylamine donor required for the synthesis of the polyamines spermine and spermidine from the diamine putrescine. In Clostridium botulinum (strain ATCC 19397 / Type A), this protein is S-adenosylmethionine decarboxylase proenzyme.